Consider the following 417-residue polypeptide: Nucleosome assembly protein (417 aa).

Residues 1 to 47 (MSDPIRTKPKSSMQIDNAPTPHNTPASVLNPSYLKNGNPVRAQAQEQ) form a disordered region. Positions 10-35 (KSSMQIDNAPTPHNTPASVLNPSYLK) are enriched in polar residues. Phosphothreonine is present on residues threonine 20 and threonine 24. Phosphoserine is present on serine 27. A Glycyl lysine isopeptide (Lys-Gly) (interchain with G-Cter in ubiquitin) cross-link involves residue lysine 50. Threonine 53 is modified (phosphothreonine). Residues serine 69, serine 76, serine 82, serine 98, serine 104, and serine 140 each carry the phosphoserine modification. Positions 143–362 (EQPKPEQIAK…IPRAVDWFTG (220 aa)) are interaction with NBA1. Residues serine 159 and serine 177 each carry the phosphoserine; by CK2 modification. Positions 330-356 (LEEDLEERLALDYSIGEQLKDKLIPRA) form a DNA-binding region, H-T-H motif. Positions 364–417 (ALEFEFEEDEEEADEDEDEEEDDDHGLEDDDGESAEEQDDFAGRPEQAPECKQS) are disordered. A compositionally biased stretch (acidic residues) spans 367 to 403 (FEFEEDEEEADEDEDEEEDDDHGLEDDDGESAEEQDD). Serine 397 carries the post-translational modification Phosphoserine; by CK2. Over residues 404–417 (FAGRPEQAPECKQS) the composition is skewed to basic and acidic residues.

It belongs to the nucleosome assembly protein (NAP) family. As to quaternary structure, component of the GIN4 complex composed of at least BNI5, CDC3, CDC10, CDC11, CDC12, GIN4, NAP1 and SHS1 which forms a ring at the bud neck. Homodimer (in-vitro). Interacts with the B-type cyclin CLB2. Interacts with 60S ribosomal protein L18 (RPL18A or RPL18B), CKA2, CKI1, eukaryotic elongation factor 1 complex eEF1A (TEF1 or TEF2), FOL1, HSC82, HTA2, HTB2, HTZ1, KAP114, KCC4, NIS1, SSA1, SSA2, SSB1, SSC1, SHM1, SIP5 and TCO89. Interacts with NBA1. Interacts with histone H3/H4 heterodimers. In terms of processing, phosphorylation by CK2 is required for normal progression through S phase. CK2 phosphorylation is not required for correct bud formation nor histone binding.

It is found in the cytoplasm. Its subcellular location is the nucleus. It localises to the bud neck. Functionally, acidic protein, which assembles histones into an octamer (in vitro). Involved in the regulation of the localization and the function of the septins during mitosis. Involved in the function of B-type cyclins. This Saccharomyces cerevisiae (strain ATCC 204508 / S288c) (Baker's yeast) protein is Nucleosome assembly protein.